Here is an 898-residue protein sequence, read N- to C-terminus: Eukaryotic translation initiation factor 3 subunit C (898 aa).

Residues 1 to 10 (MSRFFHAKED) show a composition bias toward basic and acidic residues. 2 disordered regions span residues 1 to 38 (MSRF…DDLD) and 162 to 238 (VTDY…SVTK). Acidic residues predominate over residues 11-23 (SDSDTSSSEDEVE). Over residues 24–37 (DQKVNKSAKFRDDL) the composition is skewed to basic and acidic residues. A compositionally biased stretch (acidic residues) spans 170–187 (DEDGYETPEDEDDDDFGE). Residues 189–202 (SESKAEKSPGKPSE) are compositionally biased toward basic and acidic residues. The segment covering 209–218 (SDSDSDDDDS) has biased composition (acidic residues). The segment covering 219 to 228 (SNWSSEPESN) has biased composition (low complexity). A PCI domain is found at 630 to 806 (YHMHINVELM…DCLIMHRVEP (177 aa)). The segment at 829–898 (QILEPRTGRG…RRHPQKPRAF (70 aa)) is disordered. Basic and acidic residues-rich tracts occupy residues 850–859 (RNERQGDKQK) and 866–878 (GERR…DGKR). Residues 888-898 (QRRHPQKPRAF) are compositionally biased toward basic residues.

This sequence belongs to the eIF-3 subunit C family. In terms of assembly, component of the eukaryotic translation initiation factor 3 (eIF-3) complex.

The protein localises to the cytoplasm. Component of the eukaryotic translation initiation factor 3 (eIF-3) complex, which is involved in protein synthesis of a specialized repertoire of mRNAs and, together with other initiation factors, stimulates binding of mRNA and methionyl-tRNAi to the 40S ribosome. The eIF-3 complex specifically targets and initiates translation of a subset of mRNAs involved in cell proliferation. In Caenorhabditis elegans, this protein is Eukaryotic translation initiation factor 3 subunit C.